We begin with the raw amino-acid sequence, 217 residues long: Ribonuclease HII (217 aa).

Residues 27–216 (SRVAGVDEAG…VKESIQEGVC (190 aa)) enclose the RNase H type-2 domain. The a divalent metal cation site is built by aspartate 33, glutamate 34, and aspartate 126.

This sequence belongs to the RNase HII family. It depends on Mn(2+) as a cofactor. Mg(2+) serves as cofactor.

The protein localises to the cytoplasm. The catalysed reaction is Endonucleolytic cleavage to 5'-phosphomonoester.. Functionally, endonuclease that specifically degrades the RNA of RNA-DNA hybrids. The protein is Ribonuclease HII of Chlamydia trachomatis serovar A (strain ATCC VR-571B / DSM 19440 / HAR-13).